The chain runs to 256 residues: Pimeloyl-[acyl-carrier protein] methyl ester esterase (256 aa).

In terms of domain architecture, AB hydrolase-1 spans 15-242; the sequence is HLVLLHGWGL…AAHAPFISHP (228 aa). Substrate-binding positions include W22, 82 to 83, and 143 to 147; these read SL and FLALQ. S82 functions as the Nucleophile in the catalytic mechanism. Residues D207 and H235 contribute to the active site. H235 contributes to the substrate binding site.

This sequence belongs to the AB hydrolase superfamily. Carboxylesterase BioH family. Monomer.

The protein resides in the cytoplasm. It carries out the reaction 6-carboxyhexanoyl-[ACP] methyl ester + H2O = 6-carboxyhexanoyl-[ACP] + methanol + H(+). It functions in the pathway cofactor biosynthesis; biotin biosynthesis. In terms of biological role, the physiological role of BioH is to remove the methyl group introduced by BioC when the pimeloyl moiety is complete. It allows to synthesize pimeloyl-ACP via the fatty acid synthetic pathway through the hydrolysis of the ester bonds of pimeloyl-ACP esters. This is Pimeloyl-[acyl-carrier protein] methyl ester esterase from Salmonella dublin (strain CT_02021853).